The sequence spans 130 residues: Small ribosomal subunit protein uS8 (130 aa).

This sequence belongs to the universal ribosomal protein uS8 family. Part of the 30S ribosomal subunit.

One of the primary rRNA binding proteins, it binds directly to 16S rRNA central domain where it helps coordinate assembly of the platform of the 30S subunit. In Methanothermococcus thermolithotrophicus (Methanococcus thermolithotrophicus), this protein is Small ribosomal subunit protein uS8.